A 689-amino-acid chain; its full sequence is MSEKTFLVEIGTEELPPKALRSLAESFAANFTAELDNAGLAHGNVEWFAAPRRLALKVANLAESQPDREVEKRGPAIAQAFDAEGKPSKAAEGWARGCGITVDQAERLKTDKGEWLLYRAHVKGESTEALVPNMVATSLAKLPIPKLMRWGASDVHFVRPVHTVTLLLGDKVIPATILGIQSDRVIRGHRFMGEPEFTIDNADQYPQILLEHGKVIADYEARKAKIKADAEEAARKIGGNADLSESLLEEVASLVEWPVVLTAKFEEKFLAVPAEALVYTMKGDQKYFPVYDNAGKLLPNFIFVANIESKDPTQIISGNEKVVRPRLADAEFFFNTDRKKRLEDHLPRLQTVLFQQQLGTLRDKTDRIQALAGWIAGQIGADVNHATRAGLLSKCDLMTNMVFEFTDTQGVMGMHYARHDGEAEDVAVALNEQYQPRFAGDDLPSNPVACALAIADKMDTLAGIFGIGQHPKGDKDPFALRRAALGVLRIIVEKNLALDLQTLTEEAVRLYGDKLTNANVVDDVIDFMLGRFRAWYQDEGYTVDTIQAVLARRPTRPADFDARMKAVSHFRTLEEASALAAANKRVSNILAKATEPLNDIVHASVLKEAAEIELARHLVVLRDKLQPYFADGRYQEALIELAALRAPVDEFFENVMVNAKEKDIRINRLTLLSKLRELFLQVADISLLQ.

This sequence belongs to the class-II aminoacyl-tRNA synthetase family. Tetramer of two alpha and two beta subunits.

It is found in the cytoplasm. The catalysed reaction is tRNA(Gly) + glycine + ATP = glycyl-tRNA(Gly) + AMP + diphosphate. In Salmonella choleraesuis (strain SC-B67), this protein is Glycine--tRNA ligase beta subunit.